The following is a 261-amino-acid chain: 4-hydroxy-tetrahydrodipicolinate reductase (261 aa).

NAD(+) contacts are provided by residues 11–16, 96–98, and 122–125; these read GFTGAM, GTT, and APNF. Residue H152 is the Proton donor/acceptor of the active site. H153 lines the (S)-2,3,4,5-tetrahydrodipicolinate pocket. The active-site Proton donor is the K156. Position 162–163 (162–163) interacts with (S)-2,3,4,5-tetrahydrodipicolinate; it reads GT.

The protein belongs to the DapB family.

The protein localises to the cytoplasm. The enzyme catalyses (S)-2,3,4,5-tetrahydrodipicolinate + NAD(+) + H2O = (2S,4S)-4-hydroxy-2,3,4,5-tetrahydrodipicolinate + NADH + H(+). The catalysed reaction is (S)-2,3,4,5-tetrahydrodipicolinate + NADP(+) + H2O = (2S,4S)-4-hydroxy-2,3,4,5-tetrahydrodipicolinate + NADPH + H(+). Its pathway is amino-acid biosynthesis; L-lysine biosynthesis via DAP pathway; (S)-tetrahydrodipicolinate from L-aspartate: step 4/4. Functionally, catalyzes the conversion of 4-hydroxy-tetrahydrodipicolinate (HTPA) to tetrahydrodipicolinate. The sequence is that of 4-hydroxy-tetrahydrodipicolinate reductase from Lactobacillus acidophilus (strain ATCC 700396 / NCK56 / N2 / NCFM).